We begin with the raw amino-acid sequence, 240 residues long: 4-hydroxy-tetrahydrodipicolinate reductase (240 aa).

NAD(+) contacts are provided by residues 79 to 81 (ATT) and 103 to 106 (SANM). Histidine 135 (proton donor/acceptor) is an active-site residue. Residue histidine 136 participates in (S)-2,3,4,5-tetrahydrodipicolinate binding. The Proton donor role is filled by lysine 139. A (S)-2,3,4,5-tetrahydrodipicolinate-binding site is contributed by 145–146 (GT).

The protein belongs to the DapB family.

The protein localises to the cytoplasm. The enzyme catalyses (S)-2,3,4,5-tetrahydrodipicolinate + NAD(+) + H2O = (2S,4S)-4-hydroxy-2,3,4,5-tetrahydrodipicolinate + NADH + H(+). It catalyses the reaction (S)-2,3,4,5-tetrahydrodipicolinate + NADP(+) + H2O = (2S,4S)-4-hydroxy-2,3,4,5-tetrahydrodipicolinate + NADPH + H(+). It functions in the pathway amino-acid biosynthesis; L-lysine biosynthesis via DAP pathway; (S)-tetrahydrodipicolinate from L-aspartate: step 4/4. Functionally, catalyzes the conversion of 4-hydroxy-tetrahydrodipicolinate (HTPA) to tetrahydrodipicolinate. This is 4-hydroxy-tetrahydrodipicolinate reductase from Staphylococcus aureus (strain USA300).